The sequence spans 1080 residues: Headcase protein (1080 aa).

7 disordered regions span residues 1-27, 181-277, 310-335, 655-693, 798-826, 891-916, and 940-974; these read MAPRRNSNISSSGNSTQQQHQQQLQQQ, IYLN…GNNG, SLSSSGAGSGSTSPSDSQSSGEISVS, PLESPVGTGATTTQVPNAQGSPTASGCSSNTIASKQPPK, SKYQQQQHQQQQQQRQQQHNLQPQQQHAT, SGCSSGSGSQPSLSPTASSNGNDGSK, and QRQQPPQQQVPQQQPHAASPTASLTSSSSSSNGWS. The segment covering 181-197 has biased composition (polar residues); the sequence is IYLNGSGNRPTLANGSL. The span at 218–228 shows a compositional bias: gly residues; sequence NGGGGGGGAGV. Residues 232-251 show a composition bias toward polar residues; it reads TKTPLSNNNGNSYAGLTPNP. Residues 263–277 show a composition bias toward low complexity; the sequence is NNGNTASNGSSGNNG. Over residues 663–688 the composition is skewed to polar residues; that stretch reads GATTTQVPNAQGSPTASGCSSNTIAS. The span at 801–826 shows a compositional bias: low complexity; that stretch reads QQQQHQQQQQQRQQQHNLQPQQQHAT. A compositionally biased stretch (polar residues) spans 900 to 913; the sequence is QPSLSPTASSNGND. A compositionally biased stretch (low complexity) spans 941-974; sequence RQQPPQQQVPQQQPHAASPTASLTSSSSSSNGWS.

In terms of tissue distribution, expressed in all imaginal cells of the embryo and larvae. Expressed in a subset of tracheal fusion cells from stage 14 to the end of embryogenesis in metameres 2-9, lateral trunk and ventral anastomoses.

It is found in the cytoplasm. In terms of biological role, required for imaginal cell differentiation, may be involved in hormonal responsiveness during metamorphosis. Involved in an inhibitory signaling mechanism to determine the number of cells that will form unicellular sprouts in the trachea. Regulated by transcription factor esg. The longer hdc protein is completely functional and the shorter protein carries some function. In Drosophila melanogaster (Fruit fly), this protein is Headcase protein.